The following is a 374-amino-acid chain: Serpin B8 (374 aa).

This sequence belongs to the serpin family. Ov-serpin subfamily.

It is found in the cytoplasm. Functionally, has an important role in epithelial desmosome-mediated cell-cell adhesion. This Homo sapiens (Human) protein is Serpin B8 (SERPINB8).